The sequence spans 159 residues: Alpha-lactalbumin (159 aa).

The N-terminal stretch at 1-19 is a signal peptide; sequence MMRFVPLFLACISLPAFQA. Positions 20–142 constitute a C-type lysozyme domain; the sequence is TEFTKCEVSH…KLEQWRCEKP (123 aa). Cystine bridges form between Cys-25–Cys-139, Cys-47–Cys-130, Cys-80–Cys-96, and Cys-92–Cys-110. N-linked (GlcNAc...) asparagine glycosylation occurs at Asn-64. Lys-98, Asp-101, Asp-106, and Asp-107 together coordinate Ca(2+).

This sequence belongs to the glycosyl hydrolase 22 family. Lactose synthase (LS) is a heterodimer of a catalytic component, beta1,4-galactosyltransferase (beta4Gal-T1) and a regulatory component, alpha-lactalbumin (LA). Mammary gland specific. Secreted in milk.

The protein resides in the secreted. In terms of biological role, regulatory subunit of lactose synthase, changes the substrate specificity of galactosyltransferase in the mammary gland making glucose a good acceptor substrate for this enzyme. This enables LS to synthesize lactose, the major carbohydrate component of milk. In other tissues, galactosyltransferase transfers galactose onto the N-acetylglucosamine of the oligosaccharide chains in glycoproteins. The sequence is that of Alpha-lactalbumin (Lalba) from Rattus norvegicus (Rat).